We begin with the raw amino-acid sequence, 252 residues long: Type III pantothenate kinase (252 aa).

6–13 is an ATP binding site; sequence DIGNTNIV. 107–110 contributes to the substrate binding site; the sequence is GADL. Asp-109 (proton acceptor) is an active-site residue. Asp-129 lines the K(+) pocket. Thr-132 provides a ligand contact to ATP. A substrate-binding site is contributed by Thr-184.

Belongs to the type III pantothenate kinase family. As to quaternary structure, homodimer. The cofactor is NH4(+). It depends on K(+) as a cofactor.

It localises to the cytoplasm. It catalyses the reaction (R)-pantothenate + ATP = (R)-4'-phosphopantothenate + ADP + H(+). Its pathway is cofactor biosynthesis; coenzyme A biosynthesis; CoA from (R)-pantothenate: step 1/5. In terms of biological role, catalyzes the phosphorylation of pantothenate (Pan), the first step in CoA biosynthesis. This Bifidobacterium animalis subsp. lactis (strain AD011) protein is Type III pantothenate kinase.